The following is a 248-amino-acid chain: Geranylgeranylglyceryl phosphate synthase (248 aa).

The Mg(2+) site is built by Asp-25 and Ser-50. Sn-glycerol 1-phosphate is bound by residues 170 to 176 (YLEAGSG), 201 to 202 (GG), and 223 to 224 (GT).

Belongs to the GGGP/HepGP synthase family. Group II subfamily. Requires Mg(2+) as cofactor.

Its subcellular location is the cytoplasm. The catalysed reaction is sn-glycerol 1-phosphate + (2E,6E,10E)-geranylgeranyl diphosphate = sn-3-O-(geranylgeranyl)glycerol 1-phosphate + diphosphate. It functions in the pathway membrane lipid metabolism; glycerophospholipid metabolism. Functionally, prenyltransferase that catalyzes the transfer of the geranylgeranyl moiety of geranylgeranyl diphosphate (GGPP) to the C3 hydroxyl of sn-glycerol-1-phosphate (G1P). This reaction is the first ether-bond-formation step in the biosynthesis of archaeal membrane lipids. The chain is Geranylgeranylglyceryl phosphate synthase from Methanococcus aeolicus (strain ATCC BAA-1280 / DSM 17508 / OCM 812 / Nankai-3).